Reading from the N-terminus, the 162-residue chain is Large ribosomal subunit protein uL22c (162 aa).

Belongs to the universal ribosomal protein uL22 family. In terms of assembly, part of the 50S ribosomal subunit.

Its subcellular location is the plastid. It is found in the chloroplast. In terms of biological role, this protein binds specifically to 23S rRNA. The globular domain of the protein is located near the polypeptide exit tunnel on the outside of the subunit, while an extended beta-hairpin is found that lines the wall of the exit tunnel in the center of the 70S ribosome. This is Large ribosomal subunit protein uL22c (rpl22) from Cucumis sativus (Cucumber).